A 217-amino-acid polypeptide reads, in one-letter code: Flagellin B2 (217 aa).

The propeptide occupies methionine 1–glycine 12.

Belongs to the archaeal flagellin family.

The protein localises to the archaeal flagellum. Functionally, flagellin is the subunit protein which polymerizes to form the filaments of archaeal flagella. This chain is Flagellin B2 (flaB2), found in Methanocaldococcus jannaschii (strain ATCC 43067 / DSM 2661 / JAL-1 / JCM 10045 / NBRC 100440) (Methanococcus jannaschii).